A 117-amino-acid chain; its full sequence is Ig heavy chain V-A2 region K-25 (117 aa).

The residue at position 1 (glutamine 1) is a Pyrrolidone carboxylic acid. An Ig-like domain is found at 1 to 106; sequence QSVKESEGGL…GLSYLKSSVD (106 aa). The cysteines at positions 21 and 91 are disulfide-linked.

The chain is Ig heavy chain V-A2 region K-25 from Oryctolagus cuniculus (Rabbit).